A 198-amino-acid chain; its full sequence is Dephospho-CoA kinase (198 aa).

Residues 4–198 (RIGLTGGIAS…CGLRADGTTW (195 aa)) enclose the DPCK domain. 12–17 (ASGKSS) is an ATP binding site.

The protein belongs to the CoaE family.

The protein resides in the cytoplasm. The catalysed reaction is 3'-dephospho-CoA + ATP = ADP + CoA + H(+). It participates in cofactor biosynthesis; coenzyme A biosynthesis; CoA from (R)-pantothenate: step 5/5. Its function is as follows. Catalyzes the phosphorylation of the 3'-hydroxyl group of dephosphocoenzyme A to form coenzyme A. The protein is Dephospho-CoA kinase of Parasynechococcus marenigrum (strain WH8102).